The chain runs to 347 residues: Phosphoribosylformylglycinamidine cyclo-ligase (347 aa).

It belongs to the AIR synthase family.

Its subcellular location is the cytoplasm. It carries out the reaction 2-formamido-N(1)-(5-O-phospho-beta-D-ribosyl)acetamidine + ATP = 5-amino-1-(5-phospho-beta-D-ribosyl)imidazole + ADP + phosphate + H(+). It functions in the pathway purine metabolism; IMP biosynthesis via de novo pathway; 5-amino-1-(5-phospho-D-ribosyl)imidazole from N(2)-formyl-N(1)-(5-phospho-D-ribosyl)glycinamide: step 2/2. The protein is Phosphoribosylformylglycinamidine cyclo-ligase of Alkalilimnicola ehrlichii (strain ATCC BAA-1101 / DSM 17681 / MLHE-1).